A 248-amino-acid chain; its full sequence is MHRPLPIKKILRYARNLLIFFFASTILAVIVYRFMPVYVTPLMVIRSVQQLASGDKPTWKHTWVSFDKISPHLPMAVIASEDNRFAEHNGFDFIEIEKAMKENEKRKRKRGASTISQQTAKNVFLWPQSSWVRKGFEVYFTFLIELFWSKERIMEVYLNSIEMGKGIYGAQATAKYKFNTTAAKLSSGQCALIAATLPNPIRFNSAKPSAYLLKRQKQILRLMNLVPKFPPVEKKAVDKKDTRKKKKK.

A helical transmembrane segment spans residues 17–37 (LLIFFFASTILAVIVYRFMPV).

It belongs to the glycosyltransferase 51 family.

The protein resides in the cell inner membrane. The catalysed reaction is [GlcNAc-(1-&gt;4)-Mur2Ac(oyl-L-Ala-gamma-D-Glu-L-Lys-D-Ala-D-Ala)](n)-di-trans,octa-cis-undecaprenyl diphosphate + beta-D-GlcNAc-(1-&gt;4)-Mur2Ac(oyl-L-Ala-gamma-D-Glu-L-Lys-D-Ala-D-Ala)-di-trans,octa-cis-undecaprenyl diphosphate = [GlcNAc-(1-&gt;4)-Mur2Ac(oyl-L-Ala-gamma-D-Glu-L-Lys-D-Ala-D-Ala)](n+1)-di-trans,octa-cis-undecaprenyl diphosphate + di-trans,octa-cis-undecaprenyl diphosphate + H(+). The protein operates within cell wall biogenesis; peptidoglycan biosynthesis. In terms of biological role, peptidoglycan polymerase that catalyzes glycan chain elongation from lipid-linked precursors. This chain is Biosynthetic peptidoglycan transglycosylase, found in Bacteroides thetaiotaomicron (strain ATCC 29148 / DSM 2079 / JCM 5827 / CCUG 10774 / NCTC 10582 / VPI-5482 / E50).